Reading from the N-terminus, the 821-residue chain is High affinity potassium transporter (821 aa).

Polar residues predominate over residues 1 to 10 (MSDSQSNKQN). The segment at 1–47 (MSDSQSNKQNQGEDDNNVSSSIESNENYPFRLNDEESEPQSSTTESM) is disordered. Topologically, residues 1 to 57 (MSDSQSNKQNQGEDDNNVSSSIESNENYPFRLNDEESEPQSSTTESMLKAKKQSWRQ) are cytoplasmic. Over residues 17–27 (NVSSSIESNEN) the composition is skewed to low complexity. A helical transmembrane segment spans residues 58 to 78 (VLMLGFSSLGAIYGDIGTSPL). Topologically, residues 79 to 101 (YVLNSIKYPNSSPTEEDIYGAIS) are extracellular. A helical membrane pass occupies residues 102-122 (IIFYLFTFIVIFKYILIVLFL). Topologically, residues 123–190 (GTNDGEGGQV…KASGFKTNPK (68 aa)) are cytoplasmic. The chain crosses the membrane as a helical span at residues 191-211 (LIKFISKFILFGCFFGCSLVM). Residues 212-238 (SDGLLTPTTSVLSAIAGIQIANPSFND) lie on the Extracellular side of the membrane. The helical transmembrane segment at 239 to 259 (VLAVSEVVLIVLFLIQQFGSN) threads the bilayer. Position 260 (lysine 260) is a topological domain, cytoplasmic. A helical transmembrane segment spans residues 261–281 (ISFTFAPIIFLWLIGLIISGI). The Extracellular segment spans residues 282–306 (YNIVKFHPAVFKSLSPYYAIQLLKH). Residues 307–327 (SGIDVFSGAMLSITGTEAMFA) form a helical membrane-spanning segment. At 328 to 340 (DVGHFGRLPIQLT) the chain is on the cytoplasmic side. The helical transmembrane segment at 341–361 (LTLFVYPALIICYLGQGAYII) threads the bilayer. Topologically, residues 362–386 (KHPEALSNPFFYSIPGGLNSWIYWV) are extracellular. The chain crosses the membrane as a helical span at residues 387-407 (MFVLATLSTIIASQALILGVF). The Cytoplasmic portion of the chain corresponds to 408 to 434 (SITSQLINLDCFPNFKIIHVSKKYAGK). The helical transmembrane segment at 435-455 (VYIPAINWLLMIGVCATTAGF) threads the bilayer. The Extracellular portion of the chain corresponds to 456–463 (KNSNNVTA). N-linked (GlcNAc...) asparagine glycosylation is present at asparagine 460. The chain crosses the membrane as a helical span at residues 464-484 (AYGLGITLDFLVTSSLIMVCM). Over 485–491 (TYVYNWN) the chain is Cytoplasmic. A helical transmembrane segment spans residues 492 to 512 (ILIPITYALIFLPLEVIMVIS). Topologically, residues 513–516 (NLKK) are extracellular. Residues 517-537 (ITHGAWFPLMMSGIFMMFLSF) traverse the membrane as a helical segment. The Cytoplasmic segment spans residues 538 to 821 (WRWARSRKVN…KMFLGGVVRI (284 aa)).

This sequence belongs to the HAK/KUP transporter (TC 2.A.72) family.

It localises to the membrane. In terms of biological role, major high-affinity potassium uptake protein. This Schwanniomyces occidentalis (Yeast) protein is High affinity potassium transporter (HAK1).